The following is a 758-amino-acid chain: MAEPHQEFDVTEDHAGTYGLGDRKDQGGYTMLQDQEGDTDAGLKESPLQTPAEDGSEEPGSETSDAKSTPTAEDVTAPLVDERAPGEQAAAQPHMEIPXGTTAEEAGIGDTPSLEDEAAGHVTQEPESGKVVREGFLGEPGPPGLSHQLVSGMPGAPLLPEGPREATRQPSGIGPEDTEGGRHAPELLKHQLLGDLHQEGPPLKGAGGKERPGSKEEVDEDRDVDESSPQDSPPSKVSPAQDGWPPQAAAREATSIPGFPAEGAIPLPVDFLSKVSTEIPASEPDRPSAGGAEGQDAPPEFTFHVEITPNVQKEQAHSEEHLRRAAFPGAPGEGPEAQGPSLGEDAKEADLPEPSEKQPAAAPRGKPISRVPQLKARMVSKSKDGTGSDDKKAKTSTRSSAKTLKNRPCLSPKHPTPGSSDPLIQPSSPAVCPEPPSSPKYVSSVTPRTGSSGAKEMKLKGADGKTKIATPRGAAPPGQKGQANATRIPAKTPPAPKTPPSSGEPPKSGDRSGYSSPGSPGTPGSRSRTPSLPTPPTREPKKVAVVRTPPKSPSSAKSRLQTAPVPMPDLKNVKSKIGSTENLKHQPGGGKVQIINKKLDLSNVQSKCGSKDNIKHVPGGGSVQIVYKPVDLSKVTSKCGSLGNIHHKPGGGQVEVKSEKLDFKDRVQSKIGSLDNITHVPGGGHKKIETHKLTFRENAKAKTDHGAEIVYKSPVVSGDTSPRHLSNVSSTGSIDMVDSPQLATLADEVSASLAKQGL.

The span at 1–26 shows a compositional bias: basic and acidic residues; sequence MAEPHQEFDVTEDHAGTYGLGDRKDQ. A disordered region spans residues 1–573; the sequence is MAEPHQEFDV…PVPMPDLKNV (573 aa). Alanine 2 is subject to N-acetylalanine. Tyrosine 18 and tyrosine 29 each carry phosphotyrosine. A Glycyl lysine isopeptide (Lys-Gly) (interchain with G-Cter in ubiquitin) cross-link involves residue lysine 44. Phosphoserine is present on residues serine 46 and serine 61. Residues 61–71 show a composition bias toward polar residues; that stretch reads SETSDAKSTPT. 3 positions are modified to phosphothreonine: threonine 69, threonine 71, and threonine 111. 2 stretches are compositionally biased toward basic and acidic residues: residues 179 to 189 and 207 to 216; these read EGGRHAPELLK and GGKERPGSKE. Position 214 is a phosphoserine (serine 214). A compositionally biased stretch (acidic residues) spans 217 to 228; it reads EVDEDRDVDESS. Residues 314–323 show a composition bias toward basic and acidic residues; it reads EQAHSEEHLR. The segment covering 325–340 has biased composition (low complexity); the sequence is AAFPGAPGEGPEAQGP. Basic and acidic residues-rich tracts occupy residues 344 to 356 and 381 to 393; these read EDAK…EPSE and KSKD…DKKA. Residues 440–452 show a composition bias toward polar residues; sequence KYVSSVTPRTGSS. Positions 455–466 are enriched in basic and acidic residues; that stretch reads KEMKLKGADGKT. A Phosphothreonine modification is found at threonine 470. Residue arginine 472 is modified to Omega-N-methylarginine. The residue at position 480 (lysine 480) is an N6,N6-dimethyllysine; alternate. Lysine 480 carries the N6-acetyllysine; alternate modification. Phosphothreonine is present on residues threonine 486, threonine 492, and threonine 498. Residues 491–503 show a composition bias toward pro residues; it reads KTPPAPKTPPSSG. Serine 502, serine 508, and serine 512 each carry phosphoserine. Over residues 504–531 the composition is skewed to low complexity; sequence EPPKSGDRSGYSSPGSPGTPGSRSRTPS. The residue at position 514 (tyrosine 514) is a Phosphotyrosine. Residues serine 515, serine 516, and serine 519 each carry the phosphoserine modification. A phosphothreonine mark is found at threonine 522 and threonine 529. Position 531 is a phosphoserine (serine 531). Threonine 534 carries the phosphothreonine modification. Residue lysine 542 is modified to N6-acetyllysine. Threonine 548 carries the post-translational modification Phosphothreonine. 2 positions are modified to phosphoserine: serine 552 and serine 554. Tau/MAP repeat units lie at residues 561–591, 592–622, 623–653, and 654–685; these read QTAP…GGGK, VQII…GGGS, VQIV…GGGQ, and VEVK…GGGH. Residue lysine 571 forms a Glycyl lysine isopeptide (Lys-Gly) (interchain with G-Cter in ubiquitin) linkage. An N6-acetyllysine; alternate modification is found at lysine 576. An N6-methyllysine; alternate modification is found at lysine 576. Residue lysine 576 forms a Glycyl lysine isopeptide (Lys-Gly) (interchain with G-Cter in ubiquitin); alternate linkage. Serine 579 carries the post-translational modification Phosphoserine. Residue lysine 584 forms a Glycyl lysine isopeptide (Lys-Gly) (interchain with G-Cter in ubiquitin) linkage. An N6-acetyllysine; alternate modification is found at lysine 598. Lysine 598 participates in a covalent cross-link: Glycyl lysine isopeptide (Lys-Gly) (interchain with G-Cter in ubiquitin); alternate. 2 positions are modified to phosphoserine: serine 602 and serine 606. The residue at position 607 (lysine 607) is an N6-acetyllysine. Serine 610 carries the phosphoserine modification. Lysine 615 bears the N6-acetyllysine; alternate mark. Residue lysine 615 forms a Glycyl lysine isopeptide (Lys-Gly) (interchain with G-Cter in ubiquitin); alternate linkage. Serine 622 is subject to Phosphoserine. Lysine 628 is modified (N6,N6-dimethyllysine; alternate). 3 positions are modified to N6-acetyllysine; alternate: lysine 628, lysine 634, and lysine 638. Residues lysine 628, lysine 634, and lysine 638 each participate in a glycyl lysine isopeptide (Lys-Gly) (interchain with G-Cter in ubiquitin); alternate cross-link. Residue serine 641 is modified to Phosphoserine. 3 positions are modified to N6-acetyllysine; alternate: lysine 648, lysine 660, and lysine 664. Residues lysine 648, lysine 660, and lysine 664 each participate in a glycyl lysine isopeptide (Lys-Gly) (interchain with G-Cter in ubiquitin); alternate cross-link. Arginine 666 is modified (omega-N-methylarginine). Residue serine 669 is modified to Phosphoserine. Lysine 670 is covalently cross-linked (Glycyl lysine isopeptide (Lys-Gly) (interchain with G-Cter in ubiquitin)). Serine 673 is subject to Phosphoserine. An N6-acetyllysine; alternate modification is found at lysine 686. A Glycyl lysine isopeptide (Lys-Gly) (interchain with G-Cter in ubiquitin); alternate cross-link involves residue lysine 686. Lysine 692 participates in a covalent cross-link: Glycyl lysine isopeptide (Lys-Gly) (interchain with G-Cter in ubiquitin). N6-acetyllysine; alternate is present on lysine 702. Lysine 702 participates in a covalent cross-link: Glycyl lysine isopeptide (Lys-Gly) (interchain with G-Cter in ubiquitin); alternate. At tyrosine 711 the chain carries Phosphotyrosine. Residues serine 713 and serine 717 each carry the phosphoserine modification. Residues 715 to 734 form a disordered region; it reads VVSGDTSPRHLSNVSSTGSI. A compositionally biased stretch (polar residues) spans 718–733; sequence GDTSPRHLSNVSSTGS. At threonine 720 the chain carries Phosphothreonine. Phosphoserine occurs at positions 721, 726, 733, and 739. Threonine 744 carries the phosphothreonine modification.

Interacts with MARK1, MARK2, MARK3 and MARK4. Interacts with SQSTM1 when polyubiquitinated. Interacts with PSMC2 through SQSTM1. Interacts with FKBP4. Binds to CSNK1D. Interacts with SGK1. Interacts with EPM2A; the interaction dephosphorylates MAPT at Ser-396. Interacts with PIN1. Interacts with LRRK2. Interacts with LRP1, leading to endocytosis; this interaction is reduced in the presence of LRPAP1/RAP. Polyubiquitinated. Requires functional TRAF6 and may provoke SQSTM1-dependent degradation by the proteasome. In terms of processing, phosphorylation at various serine and threonine residues in S-P or T-P motifs by proline-directed protein kinases (PDPK1, CDK1, CDK5, GSK3, MAPK) (a few sites per protein in interphase, more in mitosis), and at serine residues in K-X-G-S motifs by MAP/microtubule affinity-regulating kinase (MARK1, MARK2, MARK3 or MARK4), causing detachment from microtubules, and their disassembly. Phosphorylation at Ser-579 by BRSK1 and BRSK2 in neurons affects ability to bind microtubules and plays a role in neuron polarization. Phosphorylated by PHK. Dephosphorylation at several serine and threonine residues by the serine/threonine phosphatase PPP5C. Phosphorylation at Ser-214 by SGK1 mediates microtubule depolymerization and neurite formation in hippocampal neurons.

It localises to the cytoplasm. The protein resides in the cytosol. The protein localises to the cell membrane. Its subcellular location is the cytoskeleton. It is found in the cell projection. It localises to the axon. The protein resides in the dendrite. Promotes microtubule assembly and stability, and might be involved in the establishment and maintenance of neuronal polarity. The C-terminus binds axonal microtubules while the N-terminus binds neural plasma membrane components, suggesting that tau functions as a linker protein between both. Axonal polarity is predetermined by tau localization (in the neuronal cell) in the domain of the cell body defined by the centrosome. The short isoforms allow plasticity of the cytoskeleton whereas the longer isoforms may preferentially play a role in its stabilization. This Pongo pygmaeus (Bornean orangutan) protein is Microtubule-associated protein tau (MAPT).